A 381-amino-acid chain; its full sequence is Cytochrome b (381 aa).

4 helical membrane-spanning segments follow: residues 34–54 (FGSL…FLAM), 78–99 (WLIR…YLHI), 114–134 (WNIG…GYVL), and 179–199 (FFAF…IHLL). The heme b site is built by histidine 84 and histidine 98. Heme b-binding residues include histidine 183 and histidine 197. Histidine 202 serves as a coordination point for a ubiquinone. A run of 4 helical transmembrane segments spans residues 227 to 247 (YKDL…ALFM), 289 to 309 (LGGV…PLLH), 321 to 341 (LTQI…WIGG), and 348 to 368 (FITV…IIMP).

The protein belongs to the cytochrome b family. The cytochrome bc1 complex contains 3 respiratory subunits (MT-CYB, CYC1 and UQCRFS1), 2 core proteins (UQCRC1 and UQCRC2) and probably 6 low-molecular weight proteins. The cofactor is heme b.

Its subcellular location is the mitochondrion inner membrane. Component of the ubiquinol-cytochrome c reductase complex (complex III or cytochrome b-c1 complex) that is part of the mitochondrial respiratory chain. The b-c1 complex mediates electron transfer from ubiquinol to cytochrome c. Contributes to the generation of a proton gradient across the mitochondrial membrane that is then used for ATP synthesis. This chain is Cytochrome b (mt-cyb), found in Sphyrna lewini (Scalloped hammerhead shark).